An 806-amino-acid chain; its full sequence is Ribonucleoside-diphosphate reductase large subunit (806 aa).

The 91-residue stretch at 1–91 (MYVLNRKGEE…TDNLHKNTSD (91 aa)) folds into the ATP-cone domain. Residues 5 to 6 (NR), 11 to 17 (EDISFDQ), Thr52, and Asp56 each bind ATP. A GDP-binding site is contributed by Ser215. Cysteines 216 and 442 form a disulfide. DTTP contacts are provided by residues 224–226 (DSI), Lys241, Arg254, and 261–262 (RG). Residue Asn425 participates in GDP binding. Catalysis depends on Asn425, which acts as the Proton acceptor. Cys427 functions as the Cysteine radical intermediate in the catalytic mechanism. Residues Glu429 and 604–607 (TAST) each bind GDP. The active-site Proton acceptor is Glu429.

Belongs to the ribonucleoside diphosphate reductase large chain family. In terms of assembly, heterodimer of a large and a small subunit.

It carries out the reaction a 2'-deoxyribonucleoside 5'-diphosphate + [thioredoxin]-disulfide + H2O = a ribonucleoside 5'-diphosphate + [thioredoxin]-dithiol. Under complex allosteric control mediated by deoxynucleoside triphosphates and ATP binding to separate specificity and activation sites on the large subunit. The type of nucleotide bound at the specificity site determines substrate preference. It seems probable that ATP makes the enzyme reduce CDP and UDP, dGTP favors ADP reduction and dTTP favors GDP reduction. Stimulated by ATP and inhibited by dATP binding to the activity site. Functionally, provides the precursors necessary for DNA synthesis. Catalyzes the biosynthesis of deoxyribonucleotides from the corresponding ribonucleotides. The protein is Ribonucleoside-diphosphate reductase large subunit (RNR1) of Plasmodium falciparum (isolate Dd2).